A 218-amino-acid chain; its full sequence is MSFFDSYRKKMQMPSKEEVLPGRVQPIPTAAAHFVSGHPLKGPWPDGMKQVLFGMGCFWGAERLFWQVPGVYVTAVGYAGGITPNPTYEETCTGLTGHAEVVLVVYDPKVVTLNELLALFWEEHDPTQGMRQGNDIGTTYRSVIYTFNAVDRAVAEKSRDAYSQALASRGLGPVTTQIADAPDFYYAEDYHQQYLAKNPDGYCGLRGTGVSCPIPLAH.

Cysteine 57 is a catalytic residue.

The protein belongs to the MsrA Met sulfoxide reductase family.

It carries out the reaction L-methionyl-[protein] + [thioredoxin]-disulfide + H2O = L-methionyl-(S)-S-oxide-[protein] + [thioredoxin]-dithiol. It catalyses the reaction [thioredoxin]-disulfide + L-methionine + H2O = L-methionine (S)-S-oxide + [thioredoxin]-dithiol. Its function is as follows. Has an important function as a repair enzyme for proteins that have been inactivated by oxidation. Catalyzes the reversible oxidation-reduction of methionine sulfoxide in proteins to methionine. In Brucella abortus (strain S19), this protein is Peptide methionine sulfoxide reductase MsrA.